A 398-amino-acid polypeptide reads, in one-letter code: Alpha-2,8-sialyltransferase 8F (398 aa).

At 1–3 (MRP) the chain is on the cytoplasmic side. A helical; Signal-anchor for type II membrane protein transmembrane segment spans residues 4-24 (GGALLALLASLLLLLLLRLLW). The Lumenal portion of the chain corresponds to 25 to 398 (CPADAPGRAR…KLQFSKCEVA (374 aa)). N-linked (GlcNAc...) asparagine glycosylation is found at Asn-66, Asn-93, Asn-151, and Asn-196. Intrachain disulfides connect Cys-186–Cys-335 and Cys-200–Cys-395. Substrate is bound by residues Asn-214, 236–238 (NPS), and 322–324 (STG). The active-site Proton donor/acceptor is the His-370.

This sequence belongs to the glycosyltransferase 29 family.

The protein localises to the golgi apparatus membrane. It catalyses the reaction a ganglioside GM3 + CMP-N-acetyl-beta-neuraminate = a ganglioside GD3 + CMP + H(+). It carries out the reaction a ganglioside GM3 (d18:1(4E)) + CMP-N-acetyl-beta-neuraminate = a ganglioside GD3 (d18:1(4E)) + CMP + H(+). The catalysed reaction is a ganglioside GD1a (d18:1(4E)) + CMP-N-acetyl-beta-neuraminate = a ganglioside GT1a (d18:1(4E)) + CMP + H(+). The enzyme catalyses a ganglioside GD1a + CMP-N-acetyl-beta-neuraminate = a ganglioside GT1a + CMP + H(+). It catalyses the reaction a ganglioside GM1b (d18:1(4E)) + CMP-N-acetyl-beta-neuraminate = a ganglioside GD1c (d18:1(4E)) + CMP + H(+). It carries out the reaction a ganglioside GM1b + CMP-N-acetyl-beta-neuraminate = a ganglioside GD1c + CMP + H(+). The catalysed reaction is a ganglioside GM4 (d18:1(4E)) + CMP-N-acetyl-beta-neuraminate = an N-acetyl-alpha-neuraminosyl-(2-&gt;8)-N-acetyl-alpha-neuraminosyl-(2-&gt;3)-beta-D-galactosyl-(1&lt;-&gt;1')-N-acylsphing-4-enine + CMP + H(+). The enzyme catalyses N-acetyl-alpha-neuraminosyl-(2-&gt;3)-beta-D-galactosyl-(1&lt;-&gt;1')-ceramide + CMP-N-acetyl-beta-neuraminate = N-acetyl-alpha-neuraminosyl-(2-&gt;8)-N-acetyl-alpha-neuraminosyl-(2-&gt;3)-beta-D-galactosyl-(1&lt;-&gt;1')-ceramide + CMP + H(+). It catalyses the reaction a ganglioside GT1b (d18:1(4E)) + CMP-N-acetyl-beta-neuraminate = a ganglioside GQ1b (d18:1(4E)) + CMP + H(+). It carries out the reaction a ganglioside GT1b + CMP-N-acetyl-beta-neuraminate = a ganglioside GQ1b + CMP + H(+). It functions in the pathway protein modification; protein glycosylation. Its function is as follows. Alpha-2,8-sialyltransferase that prefers O-glycans to N-glycans or glycolipids as acceptor substrates. The minimal acceptor substrate is the NeuAc-alpha-2,3(6)-Gal sequence at the non-reducing end of their carbohydrate groups. In Homo sapiens (Human), this protein is Alpha-2,8-sialyltransferase 8F.